The following is a 278-amino-acid chain: Large ribosomal subunit protein uL2 (278 aa).

The interval 201 to 278 (HGNINDGKAG…IMRSRHQKKK (78 aa)) is disordered. Residues 210–221 (GRSRWRGKRPHV) show a composition bias toward basic residues.

It belongs to the universal ribosomal protein uL2 family. As to quaternary structure, part of the 50S ribosomal subunit. Forms a bridge to the 30S subunit in the 70S ribosome.

In terms of biological role, one of the primary rRNA binding proteins. Required for association of the 30S and 50S subunits to form the 70S ribosome, for tRNA binding and peptide bond formation. It has been suggested to have peptidyltransferase activity; this is somewhat controversial. Makes several contacts with the 16S rRNA in the 70S ribosome. The sequence is that of Large ribosomal subunit protein uL2 from Allorhizobium ampelinum (strain ATCC BAA-846 / DSM 112012 / S4) (Agrobacterium vitis (strain S4)).